Reading from the N-terminus, the 191-residue chain is Cytochrome b-245 light chain (191 aa).

The Cytoplasmic portion of the chain corresponds to Gly-2–Ala-7. A helical membrane pass occupies residues Met-8–Ala-30. At Gly-31 to Gln-35 the chain is on the extracellular side. The chain crosses the membrane as a helical span at residues Trp-36–Glu-53. Topologically, residues Tyr-54–Gly-69 are cytoplasmic. An intramembrane segment occupies Gln-70–Phe-80. The Cytoplasmic segment spans residues Gly-81–Asn-86. The helical transmembrane segment at Tyr-87 to Leu-104 threads the bilayer. Leu-105 is a topological domain (extracellular). The helical transmembrane segment at Ala-106–Ile-126 threads the bilayer. Topologically, residues Arg-127–Val-191 are cytoplasmic. Positions Ile-134–Val-191 are disordered. Position 147 is a phosphothreonine (Thr-147). Lys-149 participates in a covalent cross-link: Glycyl lysine isopeptide (Lys-Gly) (interchain with G-Cter in ubiquitin). Ser-168 is subject to Phosphoserine.

Belongs to the p22phox family. Component of the phagocyte NADPH oxidase core complex/cytochrome b558 complex, composed of CYBB (heavy chain (beta)) and CYBA (light chain (alpha)). Component of the phagocyte NADPH oxidase complex composed of an obligatory core heterodimer formed by the membrane proteins CYBA and CYBB and the cytosolic regulatory subunits NCF1/p47-phox, NCF2/p67-phox, NCF4/p40-phox and the small GTPase RAC1 or RAC2. Interacts with NCF1 (via SH3 domain). Interacts with SH3PXD2A. Interacts with DUOX1, DUOX2 and TPO. Interacts with NOX4; this interaction mediates superoxide generation. Interacts with calprotectin (S100A8/9). Interacts with GBP7. Interacts with NOXO1. Forms a heterodimer with NOX3 and is essential for activity and cell membrane localization of NOX3. Interacts with NOX1. In terms of processing, phosphorylation at Thr-147 enhances NADPH oxidase activity by promoting NCF1/p47-phox binding. Post-translationally, ubiquitinated at Lys-149 likely by RNF145.

It localises to the cell membrane. Its function is as follows. Subunit of NADPH oxidase complexes that is required for the NADPH oxidase activity that generates, in various cell types, superoxide from molecular oxygen utilizing NADPH as an electron donor. Subunit of the phagocyte NADPH oxidase complex that mediates the transfer of electrons from cytosolic NADPH to O2 to produce the superoxide anion (O2(-)). In the activated complex, electrons are first transferred from NADPH to flavin adenine dinucleotide (FAD) and subsequently transferred via two heme molecules to molecular oxygen, producing superoxide through an outer-sphere reaction. Activation of the NADPH oxidase complex is initiated by the assembly of cytosolic subunits of the NADPH oxidase complex with the core NADPH oxidase complex to form a complex at the plasma membrane or phagosomal membrane. This activation process is initiated by phosphorylation dependent binding of the cytosolic NCF1/p47-phox subunit to the C-terminus of CYBA/p22-phox. Aassociates with NOX3 to form a functional NADPH oxidase constitutively generating superoxide. This chain is Cytochrome b-245 light chain, found in Bison bison (American bison).